We begin with the raw amino-acid sequence, 347 residues long: GMP reductase (347 aa).

An NADP(+)-binding site is contributed by 108–131; sequence ADFQKTKDIMALTEDLIFICIDIA. Residues Gly181 and Gly183 each contribute to the K(+) site. Cys186 functions as the Thioimidate intermediate in the catalytic mechanism. 216 to 239 contributes to the NADP(+) binding site; that stretch reads IIGDGGCSCAGDVSKAFGGGADFV.

The protein belongs to the IMPDH/GMPR family. GuaC type 1 subfamily. In terms of assembly, homotetramer.

The enzyme catalyses IMP + NH4(+) + NADP(+) = GMP + NADPH + 2 H(+). Its function is as follows. Catalyzes the irreversible NADPH-dependent deamination of GMP to IMP. It functions in the conversion of nucleobase, nucleoside and nucleotide derivatives of G to A nucleotides, and in maintaining the intracellular balance of A and G nucleotides. This chain is GMP reductase, found in Photobacterium profundum (strain SS9).